The following is a 371-amino-acid chain: UDP-N-acetylglucosamine--N-acetylmuramyl-(pentapeptide) pyrophosphoryl-undecaprenol N-acetylglucosamine transferase (371 aa).

Residues 10–12 (TGG), N122, R166, S196, and Q301 each bind UDP-N-acetyl-alpha-D-glucosamine.

This sequence belongs to the glycosyltransferase 28 family. MurG subfamily.

The protein localises to the cell inner membrane. It carries out the reaction di-trans,octa-cis-undecaprenyl diphospho-N-acetyl-alpha-D-muramoyl-L-alanyl-D-glutamyl-meso-2,6-diaminopimeloyl-D-alanyl-D-alanine + UDP-N-acetyl-alpha-D-glucosamine = di-trans,octa-cis-undecaprenyl diphospho-[N-acetyl-alpha-D-glucosaminyl-(1-&gt;4)]-N-acetyl-alpha-D-muramoyl-L-alanyl-D-glutamyl-meso-2,6-diaminopimeloyl-D-alanyl-D-alanine + UDP + H(+). It functions in the pathway cell wall biogenesis; peptidoglycan biosynthesis. Its function is as follows. Cell wall formation. Catalyzes the transfer of a GlcNAc subunit on undecaprenyl-pyrophosphoryl-MurNAc-pentapeptide (lipid intermediate I) to form undecaprenyl-pyrophosphoryl-MurNAc-(pentapeptide)GlcNAc (lipid intermediate II). In Halothermothrix orenii (strain H 168 / OCM 544 / DSM 9562), this protein is UDP-N-acetylglucosamine--N-acetylmuramyl-(pentapeptide) pyrophosphoryl-undecaprenol N-acetylglucosamine transferase.